We begin with the raw amino-acid sequence, 379 residues long: L-lactate dehydrogenase (379 aa).

The region spanning Met-1–Pro-379 is the FMN hydroxy acid dehydrogenase domain. Tyr-24 is a binding site for substrate. FMN is bound by residues Ser-106 and Gln-127. Tyr-129 is a binding site for substrate. Thr-155 contacts FMN. Substrate is bound at residue Arg-164. Lys-251 contributes to the FMN binding site. Residue His-275 is the Proton acceptor of the active site. Arg-278 serves as a coordination point for substrate. Asp-306–Arg-330 serves as a coordination point for FMN.

This sequence belongs to the FMN-dependent alpha-hydroxy acid dehydrogenase family. The cofactor is FMN.

It is found in the cell membrane. The enzyme catalyses (S)-lactate + A = pyruvate + AH2. Its function is as follows. Catalyzes the conversion of L-lactate to pyruvate. Is coupled to the respiratory chain. The protein is L-lactate dehydrogenase of Alcaligenes faecalis.